We begin with the raw amino-acid sequence, 62 residues long: Chromatin protein Cren7 (62 aa).

Belongs to the Cren7 family. As to quaternary structure, monomer. Post-translationally, methylated at multiple sites, to varying extents.

It is found in the chromosome. The protein localises to the cytoplasm. Its function is as follows. A chromatin protein, binds double-stranded DNA without sequence specificity. Constrains negative DNA supercoils. This is Chromatin protein Cren7 from Staphylothermus marinus (strain ATCC 43588 / DSM 3639 / JCM 9404 / F1).